We begin with the raw amino-acid sequence, 346 residues long: [LysW]-lysine/[LysW]-ornithine hydrolase (346 aa).

His-68 provides a ligand contact to Zn(2+). Residue Asp-70 is part of the active site. Asp-92 is a binding site for Zn(2+). Glu-122 serves as the catalytic Proton acceptor. Glu-123, Glu-146, and His-317 together coordinate Zn(2+).

It belongs to the peptidase M20A family. LysK subfamily. It depends on Zn(2+) as a cofactor. Requires Co(2+) as cofactor.

The protein resides in the cytoplasm. It carries out the reaction [amino-group carrier protein]-C-terminal-gamma-(L-lysyl)-L-glutamate + H2O = [amino-group carrier protein]-C-terminal-L-glutamate + L-lysine. It catalyses the reaction [amino-group carrier protein]-C-terminal-gamma-(L-ornithyl)-L-glutamate + H2O = [amino-group carrier protein]-C-terminal-L-glutamate + L-ornithine. Its pathway is amino-acid biosynthesis; L-lysine biosynthesis via AAA pathway; L-lysine from L-alpha-aminoadipate (Thermus route): step 5/5. It functions in the pathway amino-acid biosynthesis; L-arginine biosynthesis. Functionally, catalyzes the release of L-lysine from [LysW]-gamma-L-lysine and the release of L-ornithine from [LysW]-L-ornithine. This chain is [LysW]-lysine/[LysW]-ornithine hydrolase, found in Saccharolobus islandicus (strain M.16.27) (Sulfolobus islandicus).